Consider the following 123-residue polypeptide: Large ribosomal subunit protein bL12 (123 aa).

It belongs to the bacterial ribosomal protein bL12 family. In terms of assembly, homodimer. Part of the ribosomal stalk of the 50S ribosomal subunit. Forms a multimeric L10(L12)X complex, where L10 forms an elongated spine to which 2 to 4 L12 dimers bind in a sequential fashion. Binds GTP-bound translation factors.

Forms part of the ribosomal stalk which helps the ribosome interact with GTP-bound translation factors. Is thus essential for accurate translation. This is Large ribosomal subunit protein bL12 from Shewanella sp. (strain ANA-3).